The sequence spans 416 residues: Probable carboxypeptidase An18g06210 (416 aa).

A signal peptide spans 1–16 (MKSPISLLAAVGVASA). N-linked (GlcNAc...) asparagine glycans are attached at residues N54, N70, and N129. Position 142 (D142) interacts with Zn(2+). Residue E174 is the Proton acceptor of the active site. A Zn(2+)-binding site is contributed by E175. Residues N187 and N319 are each glycosylated (N-linked (GlcNAc...) asparagine).

The protein belongs to the peptidase M20A family. Zn(2+) is required as a cofactor.

Its subcellular location is the secreted. This is Probable carboxypeptidase An18g06210 from Aspergillus niger (strain ATCC MYA-4892 / CBS 513.88 / FGSC A1513).